Consider the following 230-residue polypeptide: Octanoyltransferase (230 aa).

The BPL/LPL catalytic domain occupies 40-218; sequence PSLDDVLILL…CFAEVFGVEL (179 aa). Residues 82-89, 149-151, and 162-164 each bind substrate; these read RGGEVTYH, AIG, and GFA. Catalysis depends on Cys-180, which acts as the Acyl-thioester intermediate.

It belongs to the LipB family.

It is found in the cytoplasm. It catalyses the reaction octanoyl-[ACP] + L-lysyl-[protein] = N(6)-octanoyl-L-lysyl-[protein] + holo-[ACP] + H(+). The protein operates within protein modification; protein lipoylation via endogenous pathway; protein N(6)-(lipoyl)lysine from octanoyl-[acyl-carrier-protein]: step 1/2. Its function is as follows. Catalyzes the transfer of endogenously produced octanoic acid from octanoyl-acyl-carrier-protein onto the lipoyl domains of lipoate-dependent enzymes. Lipoyl-ACP can also act as a substrate although octanoyl-ACP is likely to be the physiological substrate. The protein is Octanoyltransferase of Nostoc punctiforme (strain ATCC 29133 / PCC 73102).